We begin with the raw amino-acid sequence, 1388 residues long: MAPGCKTELRSVTNGQSNQPSNEGDAIKVFVRIRPPAERSGSADGEQNLCLSVLSSTSLRLHSNPEPKTFTFDHVADVDTTQESVFATVAKSIVESCMSGYNGTIFAYGQTGSGKTFTMMGPSESDNFSHNLRGVIPRSFEYLFSLIDREKEKAGAGKSFLCKCSFIEIYNEQIYDLLDSASAGLYLREHIKKGVFVVGAVEQVVTSAAEAYQVLSGGWRNRRVASTSMNRESSRSHAVFTITIESMEKSNEIVNIRTSLLNLVDLAGSERQKDTHAEGMRLKEAGNINRSLSCLGQVITALVDVGNGKQRHVCYRDSKLTFLLRDSLGGNAKTAIIANVHPGSRCFGETLSTLNFAQRAKLIKNKAVVNEDTQGNVSQLQAEVKRLKEQLAELASGQTPPESFLTRDKKKTNYMEYFQEAMLFFKKSEQEKKSLIEKVTQLEDLTLKKEKFIQSNKMIVKFREDQIIRLEKLHKESRGGFLPEEQDRLLSELRNEIQTLREQIEHHPRVAKYAMENHSLREENRRLRLLEPVKRAQEMDAQTIAKLEKAFSEISGMEKSDKNQQGFSPKAQKEPCLFANTEKLKAQLLQIQTELNNSKQEYEEFKELTRKRQLELESELQSLQKANLNLENLLEATKACKRQEVSQLNKIHAETLKIITTPTKAYQLHSRPVPKLSPEMGSFGSLYTQNSSILDNDILNEPVPPEMNEQAFEAISEELRTVQEQMSALQAKLDEEEHKNLKLQQHVDKLEHHSTQMQELFSSERIDWTKQQEELLSQLNVLEKQLQETQTKNDFLKSEVHDLRVVLHSADKELSSVKLEYSSFKTNQEKEFNKLSERHMHVQLQLDNLRLENEKLLESKACLQDSYDNLQEIMKFEIDQLSRNLQNFKKENETLKSDLNNLMELLEAEKERNNKLSLQFEEDKENSSKEILKVLEAVRQEKQKETAKCEQQMAKVQKLEESLLATEKVISSLEKSRDSDKKVVADLMNQIQELRTSVCEKTETIDTLKQELKDINCKYNSALVDREESRVLIKKQEVDILDLKETLRLRILSEDIERDMLCEDLAHATEQLNMLTEASKKHSGLLQSAQEELTKKEALIQELQHKLNQKKEEVEQKKNEYNFKMRQLEHVMDSAAEDPQSPKTPPHFQTHLAKLLETQEQEIEDGRASKTSLEHLVTKLNEDREVKNAEILRMKEQLREMENLRLESQQLIEKNWLLQGQLDDIKRQKENSDQNHPDNQQLKNEQEESIKERLAKSKIVEEMLKMKADLEEVQSALYNKEMECLRMTDEVERTQTLESKAFQEKEQLRSKLEEMYEERERTSQEMEMLRKQVECLAEENGKLVGHQNLHQKIQYVVRLKKENVRLAEETEKLRAENVFLKEKKRSES.

Residues 1 to 25 (MAPGCKTELRSVTNGQSNQPSNEGD) form a disordered region. Polar residues predominate over residues 10-22 (RSVTNGQSNQPSN). Positions 26–363 (AIKVFVRIRP…LNFAQRAKLI (338 aa)) constitute a Kinesin motor domain. ATP is bound at residue 109–116 (GQTGSGKT). The stretch at 368–1388 (VVNEDTQGNV…FLKEKKRSES (1021 aa)) forms a coiled coil. The residue at position 399 (Thr399) is a Phosphothreonine. Ser568 carries the phosphoserine modification. Lys1009 is modified (N6-acetyllysine). Phosphoserine occurs at positions 1141 and 1169. The disordered stretch occupies residues 1228-1250 (QKENSDQNHPDNQQLKNEQEESI).

Belongs to the TRAFAC class myosin-kinesin ATPase superfamily. Kinesin family. KLP2 subfamily. Interacts with MKI67 and TPX2. As to expression, expressed in testis, colon, thymus and in breast cancer.

The protein resides in the cytoplasm. The protein localises to the cytoskeleton. Its subcellular location is the spindle. In terms of biological role, plus-end directed kinesin-like motor enzyme involved in mitotic spindle assembly. This is Kinesin-like protein KIF15 (KIF15) from Homo sapiens (Human).